We begin with the raw amino-acid sequence, 190 residues long: Elongation factor P (190 aa).

It belongs to the elongation factor P family.

The protein localises to the cytoplasm. It functions in the pathway protein biosynthesis; polypeptide chain elongation. Functionally, involved in peptide bond synthesis. Stimulates efficient translation and peptide-bond synthesis on native or reconstituted 70S ribosomes in vitro. Probably functions indirectly by altering the affinity of the ribosome for aminoacyl-tRNA, thus increasing their reactivity as acceptors for peptidyl transferase. In Persephonella marina (strain DSM 14350 / EX-H1), this protein is Elongation factor P.